The sequence spans 198 residues: 3-isopropylmalate dehydratase small subunit (198 aa).

It belongs to the LeuD family. LeuD type 1 subfamily. As to quaternary structure, heterodimer of LeuC and LeuD.

The catalysed reaction is (2R,3S)-3-isopropylmalate = (2S)-2-isopropylmalate. Its pathway is amino-acid biosynthesis; L-leucine biosynthesis; L-leucine from 3-methyl-2-oxobutanoate: step 2/4. Its function is as follows. Catalyzes the isomerization between 2-isopropylmalate and 3-isopropylmalate, via the formation of 2-isopropylmaleate. The protein is 3-isopropylmalate dehydratase small subunit of Mycobacterium marinum (strain ATCC BAA-535 / M).